The following is a 482-amino-acid chain: tRNA sulfurtransferase (482 aa).

The 105-residue stretch at 61–165 (LTIRDALTRI…DDRLLLIKGR (105 aa)) folds into the THUMP domain. Residues 183-184 (LI), Lys265, Gly287, and Gln296 contribute to the ATP site. Cys344 and Cys456 are disulfide-bonded. In terms of domain architecture, Rhodanese spans 404–482 (CGPNDVILDI…GFNNVKVYRP (79 aa)). The active-site Cysteine persulfide intermediate is the Cys456.

The protein belongs to the ThiI family.

It localises to the cytoplasm. The catalysed reaction is [ThiI sulfur-carrier protein]-S-sulfanyl-L-cysteine + a uridine in tRNA + 2 reduced [2Fe-2S]-[ferredoxin] + ATP + H(+) = [ThiI sulfur-carrier protein]-L-cysteine + a 4-thiouridine in tRNA + 2 oxidized [2Fe-2S]-[ferredoxin] + AMP + diphosphate. The enzyme catalyses [ThiS sulfur-carrier protein]-C-terminal Gly-Gly-AMP + S-sulfanyl-L-cysteinyl-[cysteine desulfurase] + AH2 = [ThiS sulfur-carrier protein]-C-terminal-Gly-aminoethanethioate + L-cysteinyl-[cysteine desulfurase] + A + AMP + 2 H(+). It functions in the pathway cofactor biosynthesis; thiamine diphosphate biosynthesis. Catalyzes the ATP-dependent transfer of a sulfur to tRNA to produce 4-thiouridine in position 8 of tRNAs, which functions as a near-UV photosensor. Also catalyzes the transfer of sulfur to the sulfur carrier protein ThiS, forming ThiS-thiocarboxylate. This is a step in the synthesis of thiazole, in the thiamine biosynthesis pathway. The sulfur is donated as persulfide by IscS. This is tRNA sulfurtransferase from Shigella dysenteriae serotype 1 (strain Sd197).